Reading from the N-terminus, the 109-residue chain is Large ribosomal subunit protein P1A (109 aa).

Residues 69–84 (APVAGGAAAPAAADGE) show a composition bias toward low complexity. The segment at 69–109 (APVAGGAAAPAAADGEAPAEEKEEAKEEEESDEDMGFGLFD) is disordered. Over residues 94 to 103 (KEEEESDEDM) the composition is skewed to acidic residues.

This sequence belongs to the eukaryotic ribosomal protein P1/P2 family. As to quaternary structure, component of the large ribosomal subunit (LSU). Mature yeast ribosomes consist of a small (40S) and a large (60S) subunit. The 40S small subunit contains 1 molecule of ribosomal RNA (18S rRNA) and at least 33 different proteins. The large 60S subunit contains 3 rRNA molecules (25S, 5.8S and 5S rRNA) and at least 46 different proteins. The acidic ribosomal P-proteins form the stalk structure of the 60S subunit. They are organized as a pentameric complex in which uL10/P0 interacts with 2 heterodimers of P1 and P2 proteins.

The protein resides in the cytoplasm. Component of the ribosome, a large ribonucleoprotein complex responsible for the synthesis of proteins in the cell. The small ribosomal subunit (SSU) binds messenger RNAs (mRNAs) and translates the encoded message by selecting cognate aminoacyl-transfer RNA (tRNA) molecules. The large subunit (LSU) contains the ribosomal catalytic site termed the peptidyl transferase center (PTC), which catalyzes the formation of peptide bonds, thereby polymerizing the amino acids delivered by tRNAs into a polypeptide chain. The nascent polypeptides leave the ribosome through a tunnel in the LSU and interact with protein factors that function in enzymatic processing, targeting, and the membrane insertion of nascent chains at the exit of the ribosomal tunnel. The sequence is that of Large ribosomal subunit protein P1A (rpp101) from Schizosaccharomyces pombe (strain 972 / ATCC 24843) (Fission yeast).